Reading from the N-terminus, the 397-residue chain is Autophagy-related protein 29 (397 aa).

A disordered region spans residues 71–397 (ATAAVRNSGP…RSRYTSSSNQ (327 aa)). A compositionally biased stretch (acidic residues) spans 230–240 (QYEDDDDDESE). The span at 245–259 (PYTSPSSKTSAQDLG) shows a compositional bias: polar residues. The segment covering 269 to 282 (SGKRPHKSHGKPAI) has biased composition (basic residues). Basic and acidic residues-rich tracts occupy residues 300 to 309 (KPDKTDRSTE) and 330 to 341 (GGKDKGYSREGS). Polar residues-rich tracts occupy residues 343 to 363 (GTPS…TQSA) and 381 to 397 (FSIS…SSNQ).

It belongs to the ATG29 family. As to quaternary structure, forms a stable complex with ATG17 and ATG31. Interacts directly with ATG31. The ATG17-ATG29-ATG31 complex interacts with the ATG1-ATG13 complex. Note=The interaction with the ATG1-ATG13 complex is induced by starvation.

Its subcellular location is the preautophagosomal structure. Functionally, plays a role in autophagy. Functions at the preautophagosomal structure (PAS) in order to form normal autophagosomes under starvation conditions. Also plays a role in mitophagy. Autophagy is required for proper vegetative growth, asexual/sexual reproduction, and full virulence. Autophagy is particularly involved in the biosynthesis of deoxynivalenol (DON), an important virulence determinant. This Gibberella zeae (strain ATCC MYA-4620 / CBS 123657 / FGSC 9075 / NRRL 31084 / PH-1) (Wheat head blight fungus) protein is Autophagy-related protein 29.